The sequence spans 128 residues: Translation initiation factor 5A (128 aa).

K35 is subject to Hypusine.

The protein belongs to the eIF-5A family.

The protein localises to the cytoplasm. Functionally, functions by promoting the formation of the first peptide bond. The chain is Translation initiation factor 5A (eif5a) from Methanosarcina acetivorans (strain ATCC 35395 / DSM 2834 / JCM 12185 / C2A).